Consider the following 526-residue polypeptide: MSKRILYQEQARRALSQGMDILAEAVAVTLGPKGRNVVLEKKYSCPQIVNDGVTIAKEIDLANHMQNTGVCLIRQAASKTNEVAGDGTTTATVLAHAMIKQGLKYVASGANPMALKTGMSLATQWLVSQIRDLAQPISDHLAIKQVASLSAGNDDQVGEMISQAFEQVGADGVISLEEGKSSQTQLQITQGMRFEKGYISPYFATAGDTVVLDQPYILLTDKKITLVKQDLLPVLTLVSRTNRALLIIADDVEKEALATLILNKLRGIIQVVAVRAPGFGDRKKALLEDMAVLTGGQVITQEAGLSLETITLDLLGEARRIEVGKSYTTIVADSNKQQVKARCEQIKQQWARSDSSYEKQQLQERLAKLSSGVAVIQVGGATEAEMKDKKLRLDDAINATRAAIEEGIVAGGGSTLVHFIKPLIEWSHHLKPEEQLGAQIVAKALSAPLHRIATNAGQNGSLIVEQVQNQPNLGYDAANHRFVNMIEAGIIDPAKVTRCALQNATSIAAMVLTTECMIVDKPSGDK.

ATP is bound by residues 29 to 32 (TLGP), 86 to 90 (DGTTT), G412, 476 to 478 (DAA), and D492.

Belongs to the chaperonin (HSP60) family. Forms a cylinder of 14 subunits composed of two heptameric rings stacked back-to-back. Interacts with the co-chaperonin GroES.

It is found in the plastid. The protein localises to the chloroplast. It catalyses the reaction ATP + H2O + a folded polypeptide = ADP + phosphate + an unfolded polypeptide.. Together with its co-chaperonin GroES, plays an essential role in assisting protein folding. The GroEL-GroES system forms a nano-cage that allows encapsulation of the non-native substrate proteins and provides a physical environment optimized to promote and accelerate protein folding. This Cyanidioschyzon merolae (strain NIES-3377 / 10D) (Unicellular red alga) protein is Chaperonin GroEL, chloroplastic.